The sequence spans 410 residues: Peptidase T (410 aa).

His79 is a Zn(2+) binding site. The active site involves Asp81. Asp142 serves as a coordination point for Zn(2+). Residue Glu176 is the Proton acceptor of the active site. Zn(2+) is bound by residues Glu177, Asp199, and His381.

This sequence belongs to the peptidase M20B family. Zn(2+) is required as a cofactor.

It is found in the cytoplasm. It catalyses the reaction Release of the N-terminal residue from a tripeptide.. Its function is as follows. Cleaves the N-terminal amino acid of tripeptides. This chain is Peptidase T, found in Bacillus licheniformis (strain ATCC 14580 / DSM 13 / JCM 2505 / CCUG 7422 / NBRC 12200 / NCIMB 9375 / NCTC 10341 / NRRL NRS-1264 / Gibson 46).